We begin with the raw amino-acid sequence, 388 residues long: tRNA(Ile)-lysidine synthase (388 aa).

Residue 51–56 (SGGRDS) coordinates ATP.

Belongs to the tRNA(Ile)-lysidine synthase family.

The protein localises to the cytoplasm. The catalysed reaction is cytidine(34) in tRNA(Ile2) + L-lysine + ATP = lysidine(34) in tRNA(Ile2) + AMP + diphosphate + H(+). Ligates lysine onto the cytidine present at position 34 of the AUA codon-specific tRNA(Ile) that contains the anticodon CAU, in an ATP-dependent manner. Cytidine is converted to lysidine, thus changing the amino acid specificity of the tRNA from methionine to isoleucine. This is tRNA(Ile)-lysidine synthase from Bifidobacterium longum subsp. infantis (strain ATCC 15697 / DSM 20088 / JCM 1222 / NCTC 11817 / S12).